The following is a 239-amino-acid chain: Ribonuclease PH (239 aa).

Residues Arg87 and Gly125–Arg127 contribute to the phosphate site.

This sequence belongs to the RNase PH family. Homohexameric ring arranged as a trimer of dimers.

The enzyme catalyses tRNA(n+1) + phosphate = tRNA(n) + a ribonucleoside 5'-diphosphate. Functionally, phosphorolytic 3'-5' exoribonuclease that plays an important role in tRNA 3'-end maturation. Removes nucleotide residues following the 3'-CCA terminus of tRNAs; can also add nucleotides to the ends of RNA molecules by using nucleoside diphosphates as substrates, but this may not be physiologically important. Probably plays a role in initiation of 16S rRNA degradation (leading to ribosome degradation) during starvation. The sequence is that of Ribonuclease PH from Cellvibrio japonicus (strain Ueda107) (Pseudomonas fluorescens subsp. cellulosa).